The following is an 879-amino-acid chain: Leucine--tRNA ligase (879 aa).

The short motif at 45–55 (PYPSGALHMGH) is the 'HIGH' region element. Positions 637–641 (KMSKS) match the 'KMSKS' region motif. Lysine 640 serves as a coordination point for ATP.

Belongs to the class-I aminoacyl-tRNA synthetase family.

The protein resides in the cytoplasm. It catalyses the reaction tRNA(Leu) + L-leucine + ATP = L-leucyl-tRNA(Leu) + AMP + diphosphate. In Xylella fastidiosa (strain 9a5c), this protein is Leucine--tRNA ligase.